We begin with the raw amino-acid sequence, 117 residues long: Large ribosomal subunit protein bL19 (117 aa).

Belongs to the bacterial ribosomal protein bL19 family.

Functionally, this protein is located at the 30S-50S ribosomal subunit interface and may play a role in the structure and function of the aminoacyl-tRNA binding site. In Thermotoga neapolitana (strain ATCC 49049 / DSM 4359 / NBRC 107923 / NS-E), this protein is Large ribosomal subunit protein bL19.